Reading from the N-terminus, the 1185-residue chain is Chromosome partition protein Smc (1185 aa).

ATP is bound at residue 32–39; the sequence is PNGSGKSN. A coiled-coil region spans residues 228–503; it reads SRLVKKLTIA…LQAVQERYTN (276 aa). A disordered region spans residues 300–323; sequence TQGQQGVDAERRQNQQSEQERLTA. Positions 307–320 are enriched in basic and acidic residues; that stretch reads DAERRQNQQSEQER. Residues 519 to 637 enclose the SMC hinge domain; it reads SGVAGAVSEL…VDTLDHAMAI (119 aa). Coiled-coil stretches lie at residues 675–928 and 989–1025; these read QQQQ…RRLE and AIDEFERVKERFDFLNNQASDLTEAKEHLLQTMADLD.

Belongs to the SMC family. As to quaternary structure, homodimer.

The protein localises to the cytoplasm. Functionally, required for chromosome condensation and partitioning. The sequence is that of Chromosome partition protein Smc from Lactiplantibacillus plantarum (strain ATCC BAA-793 / NCIMB 8826 / WCFS1) (Lactobacillus plantarum).